A 245-amino-acid chain; its full sequence is 4-hydroxy-tetrahydrodipicolinate reductase (245 aa).

NAD(+) contacts are provided by residues 7–12 (GAKGKV), 75–77 (GTT), and 102–105 (APNF). Catalysis depends on histidine 132, which acts as the Proton donor/acceptor. Histidine 133 contacts (S)-2,3,4,5-tetrahydrodipicolinate. Lysine 136 (proton donor) is an active-site residue. 142–143 (GT) is a (S)-2,3,4,5-tetrahydrodipicolinate binding site.

The protein belongs to the DapB family.

It is found in the cytoplasm. The enzyme catalyses (S)-2,3,4,5-tetrahydrodipicolinate + NAD(+) + H2O = (2S,4S)-4-hydroxy-2,3,4,5-tetrahydrodipicolinate + NADH + H(+). It catalyses the reaction (S)-2,3,4,5-tetrahydrodipicolinate + NADP(+) + H2O = (2S,4S)-4-hydroxy-2,3,4,5-tetrahydrodipicolinate + NADPH + H(+). The protein operates within amino-acid biosynthesis; L-lysine biosynthesis via DAP pathway; (S)-tetrahydrodipicolinate from L-aspartate: step 4/4. Catalyzes the conversion of 4-hydroxy-tetrahydrodipicolinate (HTPA) to tetrahydrodipicolinate. The sequence is that of 4-hydroxy-tetrahydrodipicolinate reductase from Mycobacterium ulcerans (strain Agy99).